Here is a 156-residue protein sequence, read N- to C-terminus: MNLNATLIGQLIAFALFTWFCVKFVWPPIIKAIEERQSSIANALASAEKAKQDQADSQAAVEQEILAAKEEAQKIIDLANKRRNDILEEVKTEAENLKATIIAQGHAEVEAERKRVQEELRVKVASLAIAGAEKIVGRTVDEAANNDIIDKLVAEL.

The chain crosses the membrane as a helical span at residues 7–29; it reads LIGQLIAFALFTWFCVKFVWPPI.

This sequence belongs to the ATPase B chain family. In terms of assembly, F-type ATPases have 2 components, F(1) - the catalytic core - and F(0) - the membrane proton channel. F(1) has five subunits: alpha(3), beta(3), gamma(1), delta(1), epsilon(1). F(0) has three main subunits: a(1), b(2) and c(10-14). The alpha and beta chains form an alternating ring which encloses part of the gamma chain. F(1) is attached to F(0) by a central stalk formed by the gamma and epsilon chains, while a peripheral stalk is formed by the delta and b chains.

The protein resides in the cell inner membrane. Functionally, f(1)F(0) ATP synthase produces ATP from ADP in the presence of a proton or sodium gradient. F-type ATPases consist of two structural domains, F(1) containing the extramembraneous catalytic core and F(0) containing the membrane proton channel, linked together by a central stalk and a peripheral stalk. During catalysis, ATP synthesis in the catalytic domain of F(1) is coupled via a rotary mechanism of the central stalk subunits to proton translocation. Component of the F(0) channel, it forms part of the peripheral stalk, linking F(1) to F(0). The polypeptide is ATP synthase subunit b (Mannheimia succiniciproducens (strain KCTC 0769BP / MBEL55E)).